The following is a 466-amino-acid chain: Soluble pyridine nucleotide transhydrogenase (466 aa).

36-45 (ERYQNVGGGC) provides a ligand contact to FAD.

Belongs to the class-I pyridine nucleotide-disulfide oxidoreductase family. As to quaternary structure, homooligomer; probable homooctamer. The cofactor is FAD.

Its subcellular location is the cytoplasm. It carries out the reaction NAD(+) + NADPH = NADH + NADP(+). In terms of biological role, conversion of NADPH, generated by peripheral catabolic pathways, to NADH, which can enter the respiratory chain for energy generation. The sequence is that of Soluble pyridine nucleotide transhydrogenase from Escherichia coli O6:H1 (strain CFT073 / ATCC 700928 / UPEC).